Here is a 1128-residue protein sequence, read N- to C-terminus: Zinc finger protein 654 (1128 aa).

The segment at glycine 498–histidine 523 is disordered. C2H2-type zinc fingers lie at residues phenylalanine 572–histidine 594, phenylalanine 746–histidine 771, glycine 787–histidine 809, tyrosine 815–histidine 839, and alanine 844–histidine 868. Residues aspartate 891 to serine 951 form a disordered region. Composition is skewed to polar residues over residues asparagine 903 to serine 915 and serine 937 to serine 951. Phosphoserine is present on residues serine 1123 and serine 1127.

Belongs to the krueppel C2H2-type zinc-finger protein family.

It is found in the nucleus. Its function is as follows. May be involved in transcriptional regulation. The polypeptide is Zinc finger protein 654 (Homo sapiens (Human)).